Here is a 653-residue protein sequence, read N- to C-terminus: tRNA 5-methylaminomethyl-2-thiouridine biosynthesis bifunctional protein MnmC (653 aa).

A tRNA (mnm(5)s(2)U34)-methyltransferase region spans residues 1–233 (MKTAPITPGR…KRDITVARFT (233 aa)). Positions 258–653 (IGAGLAGCAA…YALPRWRSDS (396 aa)) are FAD-dependent cmnm(5)s(2)U34 oxidoreductase.

In the N-terminal section; belongs to the methyltransferase superfamily. tRNA (mnm(5)s(2)U34)-methyltransferase family. The protein in the C-terminal section; belongs to the DAO family. The cofactor is FAD.

It is found in the cytoplasm. The enzyme catalyses 5-aminomethyl-2-thiouridine(34) in tRNA + S-adenosyl-L-methionine = 5-methylaminomethyl-2-thiouridine(34) in tRNA + S-adenosyl-L-homocysteine + H(+). Catalyzes the last two steps in the biosynthesis of 5-methylaminomethyl-2-thiouridine (mnm(5)s(2)U) at the wobble position (U34) in tRNA. Catalyzes the FAD-dependent demodification of cmnm(5)s(2)U34 to nm(5)s(2)U34, followed by the transfer of a methyl group from S-adenosyl-L-methionine to nm(5)s(2)U34, to form mnm(5)s(2)U34. The chain is tRNA 5-methylaminomethyl-2-thiouridine biosynthesis bifunctional protein MnmC from Methylibium petroleiphilum (strain ATCC BAA-1232 / LMG 22953 / PM1).